The sequence spans 514 residues: 2,3-bisphosphoglycerate-independent phosphoglycerate mutase (514 aa).

Residues Asp-14 and Ser-64 each coordinate Mn(2+). Ser-64 (phosphoserine intermediate) is an active-site residue. Substrate contacts are provided by residues His-125, 155–156, Arg-187, Arg-193, 263–266, and Lys-336; these read RD and RADR. Asp-403, His-407, Asp-444, His-445, and His-463 together coordinate Mn(2+).

Belongs to the BPG-independent phosphoglycerate mutase family. Monomer. It depends on Mn(2+) as a cofactor.

It carries out the reaction (2R)-2-phosphoglycerate = (2R)-3-phosphoglycerate. It functions in the pathway carbohydrate degradation; glycolysis; pyruvate from D-glyceraldehyde 3-phosphate: step 3/5. Its function is as follows. Catalyzes the interconversion of 2-phosphoglycerate and 3-phosphoglycerate. The chain is 2,3-bisphosphoglycerate-independent phosphoglycerate mutase from Shewanella sp. (strain W3-18-1).